Consider the following 346-residue polypeptide: tRNA/tmRNA (uracil-C(5))-methyltransferase (346 aa).

Positions 168, 197, 202, 218, and 278 each coordinate S-adenosyl-L-methionine. Cysteine 303 (nucleophile) is an active-site residue. The Proton acceptor role is filled by glutamate 337.

The protein belongs to the class I-like SAM-binding methyltransferase superfamily. RNA M5U methyltransferase family. TrmA subfamily.

The enzyme catalyses uridine(54) in tRNA + S-adenosyl-L-methionine = 5-methyluridine(54) in tRNA + S-adenosyl-L-homocysteine + H(+). It catalyses the reaction uridine(341) in tmRNA + S-adenosyl-L-methionine = 5-methyluridine(341) in tmRNA + S-adenosyl-L-homocysteine + H(+). In terms of biological role, dual-specificity methyltransferase that catalyzes the formation of 5-methyluridine at position 54 (m5U54) in all tRNAs, and that of position 341 (m5U341) in tmRNA (transfer-mRNA). In Campylobacter lari (strain RM2100 / D67 / ATCC BAA-1060), this protein is tRNA/tmRNA (uracil-C(5))-methyltransferase.